Consider the following 402-residue polypeptide: Multidrug resistance protein MdtH (402 aa).

The next 10 helical transmembrane spans lie at 13 to 33, 34 to 54, 99 to 116, 139 to 159, 165 to 185, 214 to 234, 244 to 264, 277 to 297, 340 to 360, and 368 to 388; these read YFLLIDNLLVVLGFFVVFPLI, SIRFVDQLGWAALIVGIALGL, PWILWASCTLSALGGTLF, LLMMQDSAGAVIGALIGSWLL, YVCWAGAALFVLAAAWNAWLL, VLTLTGYYMLAVQVMLMLPIM, AVKWMYAIEAALSLTLLYPIA, LMFGLLLMTLSLFPLGLSTTL, LGLALGGALGYTGGGWMYDMG, and LPWALLGIIGMLTLALLYWQF.

The protein belongs to the major facilitator superfamily. DHA1 family. MdtH (TC 2.A.1.2.21) subfamily.

It is found in the cell inner membrane. In Edwardsiella ictaluri (strain 93-146), this protein is Multidrug resistance protein MdtH.